Here is a 336-residue protein sequence, read N- to C-terminus: Peroxidase 20 (336 aa).

A signal peptide spans 1 to 24 (MEIKQKKVWLSLIVLYAITTSVLG). Intrachain disulfides connect cysteine 39-cysteine 119, cysteine 72-cysteine 77, cysteine 125-cysteine 331, and cysteine 204-cysteine 239. Histidine 70 acts as the Proton acceptor in catalysis. 5 residues coordinate Ca(2+): aspartate 71, valine 74, glycine 76, aspartate 78, and serine 80. Proline 167 is a substrate binding site. The N-linked (GlcNAc...) asparagine glycan is linked to asparagine 170. Heme b is bound at residue histidine 197. Ca(2+) is bound at residue threonine 198. The Ca(2+) site is built by aspartate 252, threonine 255, and aspartate 260.

Belongs to the peroxidase family. Classical plant (class III) peroxidase subfamily. It depends on heme b as a cofactor. Ca(2+) is required as a cofactor.

The protein localises to the secreted. It catalyses the reaction 2 a phenolic donor + H2O2 = 2 a phenolic radical donor + 2 H2O. Its function is as follows. Removal of H(2)O(2), oxidation of toxic reductants, biosynthesis and degradation of lignin, suberization, auxin catabolism, response to environmental stresses such as wounding, pathogen attack and oxidative stress. These functions might be dependent on each isozyme/isoform in each plant tissue. In terms of biological role, may be implicated in the systemic acquired resistance response via the salicylic acid signal transduction pathway. The sequence is that of Peroxidase 20 (PER20) from Arabidopsis thaliana (Mouse-ear cress).